Consider the following 134-residue polypeptide: MSWQAYVDDHLMCDIEGHEDHRLTAAAIVGHDGSVWAQSATFPQFKPEEMNGIMTDFNEPGHLAPTGLHLGGTKYMVIQGEAGAVIRGKKGSGGITIKKTGQALVFGIYEEPVTPGQCNMVVERLGDYLVEQGM.

Cys13 and Cys118 are disulfide-bonded. An Involved in PIP2 interaction motif is present at residues 84 to 100; that stretch reads AVIRGKKGSGGITIKKT. Thr114 is subject to Phosphothreonine.

This sequence belongs to the profilin family. In terms of assembly, occurs in many kinds of cells as a complex with monomeric actin in a 1:1 ratio. Phosphorylated by MAP kinases.

The protein resides in the cytoplasm. Its subcellular location is the cytoskeleton. In terms of biological role, binds to actin and affects the structure of the cytoskeleton. At high concentrations, profilin prevents the polymerization of actin, whereas it enhances it at low concentrations. By binding to PIP2, it inhibits the formation of IP3 and DG. This Olea europaea (Common olive) protein is Profilin-1 (PRO1).